The sequence spans 414 residues: V-set and immunoglobulin domain-containing protein 8 (414 aa).

An N-terminal signal peptide occupies residues methionine 1–alanine 21. Ig-like V-type domains are found at residues valine 22–threonine 141 and proline 146–serine 257. Over valine 22 to glycine 263 the chain is Extracellular. Disulfide bonds link cysteine 44-cysteine 126 and cysteine 167-cysteine 239. The helical transmembrane segment at valine 264–tryptophan 284 threads the bilayer. The Cytoplasmic segment spans residues glycine 285–valine 414.

Its subcellular location is the membrane. This Homo sapiens (Human) protein is V-set and immunoglobulin domain-containing protein 8.